We begin with the raw amino-acid sequence, 374 residues long: Phospho-2-dehydro-3-deoxyheptonate aldolase AMT16 (374 aa).

The protein belongs to the class-I DAHP synthase family.

The catalysed reaction is D-erythrose 4-phosphate + phosphoenolpyruvate + H2O = 7-phospho-2-dehydro-3-deoxy-D-arabino-heptonate + phosphate. It participates in mycotoxin biosynthesis. Its function is as follows. Nonribosomal peptide synthetase; part of the gene clusters that mediate the biosynthesis of AM-toxins, host-selective toxins (HSTs) causing Alternaria blotch on apple, a worldwide distributed disease. AM-toxins are cyclic depsipeptides containing the 3 residues 2-hydroxy-isovaleric acid (2-HIV), dehydroalanine, L-alanine which are common for all 3 AM-toxins I to III. The fourth precursor is L-alpha-amino-methoxyphenyl-valeric acid (L-Amv) for AM-toxin I, L-alpha-amino-phenyl-valeric acid (L-Apv) for AM-toxin II, and L-alpha-amino-hydroxyphenyl-valeric acid (L-Ahv) for AM-toxin III. AM-toxins have two target sites for affecting susceptible apple cells; they cause invagination of the plasma membrane and electrolyte loss and chloroplast disorganization. The non-ribosomal peptide synthetase AMT1 contains 4 catalytic modules and is responsible for activation of each residue in AM-toxin. The aldo-keto reductase AMT2 catalyzes the conversion of 2-keto-isovaleric acid (2-KIV) to 2-hydroxy-isovaleric acid (2-HIV), one of the precursor residues incorporated by AMT1 during AM-toxin biosynthesis, by reduction of its ketone to an alcohol. The cytochrome P450 monooxygenase AMT3 and the thioesterase AMT4 are also important for AM-toxin production, but their exact function within the AM-toxin biosynthesis are not known yet. Up to 21 proteins (including AMT1 to AMT4) are predicted to be involved in AM-toxin biosynthesis since their expression ishighly up-regulated in AM-toxin-producing cultures. The chain is Phospho-2-dehydro-3-deoxyheptonate aldolase AMT16 from Alternaria alternata (Alternaria rot fungus).